The sequence spans 242 residues: tRNA (guanine-N(1)-)-methyltransferase (242 aa).

Residues Gly111 and 130-135 (IGDYVL) contribute to the S-adenosyl-L-methionine site.

Belongs to the RNA methyltransferase TrmD family. In terms of assembly, homodimer.

The protein localises to the cytoplasm. The enzyme catalyses guanosine(37) in tRNA + S-adenosyl-L-methionine = N(1)-methylguanosine(37) in tRNA + S-adenosyl-L-homocysteine + H(+). Specifically methylates guanosine-37 in various tRNAs. This Onion yellows phytoplasma (strain OY-M) protein is tRNA (guanine-N(1)-)-methyltransferase.